Reading from the N-terminus, the 313-residue chain is Foldase protein PrsA (313 aa).

An N-terminal signal peptide occupies residues 1–20; that stretch reads MKKKLLAGAITLLSVATLAA. Residue cysteine 21 is the site of N-palmitoyl cysteine attachment. A lipid anchor (S-diacylglycerol cysteine) is attached at cysteine 21. The 99-residue stretch at 143 to 241 folds into the PpiC domain; sequence TPDVTAQIIR…SQYYIVKLTK (99 aa).

Belongs to the PrsA family.

The protein resides in the cell membrane. It carries out the reaction [protein]-peptidylproline (omega=180) = [protein]-peptidylproline (omega=0). Functionally, plays a major role in protein secretion by helping the post-translocational extracellular folding of several secreted proteins. The protein is Foldase protein PrsA of Streptococcus pneumoniae (strain ATCC BAA-255 / R6).